The primary structure comprises 218 residues: Serine/threonine-protein phosphatase 2 (218 aa).

Mn(2+) is bound by residues D22, H24, D51, and N77. Residue H78 is the Proton donor of the active site. H187 lines the Mn(2+) pocket.

It belongs to the PPP phosphatase family. Mn(2+) is required as a cofactor.

It carries out the reaction O-phospho-L-seryl-[protein] + H2O = L-seryl-[protein] + phosphate. The catalysed reaction is O-phospho-L-threonyl-[protein] + H2O = L-threonyl-[protein] + phosphate. In terms of biological role, has been shown, in vitro, to act on Ser, Thr and Tyr-phosphorylated substrates. In Escherichia coli (strain K12), this protein is Serine/threonine-protein phosphatase 2 (pphB).